An 81-amino-acid polypeptide reads, in one-letter code: Acyl carrier protein (81 aa).

The 76-residue stretch at 4–79 folds into the Carrier domain; that stretch reads QEIFEKVQTI…QAVDFISQKV (76 aa). O-(pantetheine 4'-phosphoryl)serine is present on Ser39.

The protein belongs to the acyl carrier protein (ACP) family. 4'-phosphopantetheine is transferred from CoA to a specific serine of apo-ACP by AcpS. This modification is essential for activity because fatty acids are bound in thioester linkage to the sulfhydryl of the prosthetic group.

It is found in the plastid. It localises to the chloroplast. Its pathway is lipid metabolism; fatty acid biosynthesis. In terms of biological role, carrier of the growing fatty acid chain in fatty acid biosynthesis. The sequence is that of Acyl carrier protein from Guillardia theta (Cryptophyte).